The sequence spans 547 residues: Methionine--tRNA ligase (547 aa).

A 'HIGH' region motif is present at residues 15–25 (PYANGSIHIGH). Cysteine 146, cysteine 149, cysteine 159, and cysteine 162 together coordinate Zn(2+). Positions 332-336 (KLSKS) match the 'KMSKS' region motif. Lysine 335 lines the ATP pocket.

Belongs to the class-I aminoacyl-tRNA synthetase family. MetG type 1 subfamily. Monomer. Requires Zn(2+) as cofactor.

The protein resides in the cytoplasm. The enzyme catalyses tRNA(Met) + L-methionine + ATP = L-methionyl-tRNA(Met) + AMP + diphosphate. Is required not only for elongation of protein synthesis but also for the initiation of all mRNA translation through initiator tRNA(fMet) aminoacylation. The chain is Methionine--tRNA ligase (metG) from Buchnera aphidicola subsp. Acyrthosiphon pisum (strain APS) (Acyrthosiphon pisum symbiotic bacterium).